The sequence spans 1033 residues: E3 ubiquitin-protein ligase Topors (1033 aa).

The span at 1–10 (MGSQPPPPGS) shows a compositional bias: pro residues. Residues 1-36 (MGSQPPPPGSPLSREEGEAPPLVPAEEGRRRSRRVR) are disordered. The interval 52–376 (ELASNGPAVP…MAAFDQHANY (325 aa)) is required for DNA-binding. Glycyl lysine isopeptide (Lys-Gly) (interchain with G-Cter in SUMO2) cross-links involve residues K74, K77, K84, and K89. Residue S99 is modified to Phosphoserine. The segment at 104–143 (CPICLDRFDNVSYLDRCLHKFCFRCVQEWSKNKAECPLCK) adopts an RING-type zinc-finger fold. A Glycyl lysine isopeptide (Lys-Gly) (interchain with G-Cter in SUMO2) cross-link involves residue K160. Position 196 is a phosphoserine (S196). A Glycyl lysine isopeptide (Lys-Gly) (interchain with G-Cter in SUMO2) cross-link involves residue K251. Disordered stretches follow at residues 414–477 (QAPW…SSSD) and 496–692 (VELS…RYYL). Residues 434-444 (VGVSSLLNSSD) are compositionally biased toward low complexity. Residues 438–574 (SLLNSSDSSD…RSTSLPAPRD (137 aa)) form a sumoylation and localization to discrete nuclear foci region. The interval 438–654 (SLLNSSDSSD…RSRTRDSSWS (217 aa)) is interaction with SUMO1. The segment covering 455-464 (TTSQIQGVQT) has biased composition (polar residues). Residues 457-731 (SQIQGVQTND…RRTLSRAHYS (275 aa)) are interaction with p53/TP53. The segment at 457–879 (SQIQGVQTND…GKATDTSKHH (423 aa)) is interaction with TOP1. Low complexity predominate over residues 465-477 (NDDVNNDSDSSSD). S500 is modified (phosphoserine). Residues 507–518 (PYEKVETVKTQE) are compositionally biased toward basic and acidic residues. Low complexity predominate over residues 522-535 (SYSSGDSDVSRASS). Over residues 540–566 (LGKDEQMSKSHCDSDTRISSKKEEKRS) the composition is skewed to basic and acidic residues. Residue K561 forms a Glycyl lysine isopeptide (Lys-Gly) (interchain with G-Cter in SUMO) linkage. S585 is subject to Phosphoserine. 2 stretches are compositionally biased toward basic residues: residues 613-629 (RNHR…KRSR) and 637-647 (PRARKDKKRSR). The segment covering 654–669 (SRRSQTLSLSSGSTSR) has biased composition (low complexity). K701 participates in a covalent cross-link: Glycyl lysine isopeptide (Lys-Gly) (interchain with G-Cter in SUMO2). 2 disordered regions span residues 713–934 (RDGY…PIQD) and 970–1033 (TVEN…CDVS). S718 carries the phosphoserine; by PLK1 modification. Over residues 721 to 730 (RRRTLSRAHY) the composition is skewed to basic residues. A compositionally biased stretch (polar residues) spans 731–747 (SRQSSSPEFRIQSFSER). Phosphoserine is present on S734. Low complexity predominate over residues 770–780 (SVSSNRSRTTS). Residues 815–837 (FTSKGKDSHYQKSKLDGSYKNES) are compositionally biased toward basic and acidic residues. Glycyl lysine isopeptide (Lys-Gly) (interchain with G-Cter in SUMO2) cross-links involve residues K818 and K834. A compositionally biased stretch (basic residues) spans 851–860 (KHKRRRRRTR). Positions 851–914 (KHKRRRRRTR…ITIDSDSDGE (64 aa)) are interaction with UBE2I. S861 and S863 each carry phosphoserine. Basic residues predominate over residues 877–894 (KHHKKKKKKHKKKHKKHH). Phosphoserine occurs at positions 909, 911, 999, 1016, and 1025. A compositionally biased stretch (polar residues) spans 992-1008 (TFASDLESQSSNVSIQA).

In terms of assembly, interacts with TOP1. Interacts with the SUMO1 conjugating enzyme UBE2I. Interacts with SUMO1. Interacts with NKX3-1; polyubiquitinates NKX3-1 and induces its proteasomal degradation. Interacts with SIN3A; sumoylates SIN3A. Interacts with IKBKE; induced by DNA damage. Interacts with p53/TP53. Interacts with PARK7/DJ-1. Post-translationally, phosphorylation at Ser-99 regulates the E3 ubiquitin-protein ligase activity but not the SUMO1-protein ligase activity. Phosphorylation at Ser-718 increases the E3 ubiquitin-protein ligase activity versus the E3 SUMO1-protein ligase activity resulting in increased p53/TP53 ubiquitination and degradation. In terms of processing, sumoylated.

It is found in the nucleus. The protein localises to the PML body. It carries out the reaction S-ubiquitinyl-[E2 ubiquitin-conjugating enzyme]-L-cysteine + [acceptor protein]-L-lysine = [E2 ubiquitin-conjugating enzyme]-L-cysteine + N(6)-ubiquitinyl-[acceptor protein]-L-lysine.. In terms of biological role, functions as an E3 ubiquitin-protein ligase and as a E3 SUMO1-protein ligase. Probable tumor suppressor involved in cell growth, cell proliferation and apoptosis that regulates p53/TP53 stability through ubiquitin-dependent degradation. May regulate chromatin modification through sumoylation of several chromatin modification-associated proteins. May be involved in DNA-damage-induced cell death through IKBKE sumoylation. This chain is E3 ubiquitin-protein ligase Topors (Topors), found in Mus musculus (Mouse).